Reading from the N-terminus, the 290-residue chain is Acetylglutamate kinase (290 aa).

Substrate-binding positions include 64–65 (GG), R86, and N183.

It belongs to the acetylglutamate kinase family. ArgB subfamily.

It is found in the cytoplasm. It catalyses the reaction N-acetyl-L-glutamate + ATP = N-acetyl-L-glutamyl 5-phosphate + ADP. The protein operates within amino-acid biosynthesis; L-arginine biosynthesis; N(2)-acetyl-L-ornithine from L-glutamate: step 2/4. In terms of biological role, catalyzes the ATP-dependent phosphorylation of N-acetyl-L-glutamate. This chain is Acetylglutamate kinase, found in Halothermothrix orenii (strain H 168 / OCM 544 / DSM 9562).